Here is a 466-residue protein sequence, read N- to C-terminus: Tissue alpha-L-fucosidase (466 aa).

A signal peptide spans 1-31 (MRAPGMRSRPAGPALLLLLLFLGAAESVRRA). Threonine 170 carries the phosphothreonine modification. Asparagine 241, asparagine 268, and asparagine 382 each carry an N-linked (GlcNAc...) asparagine glycan.

It belongs to the glycosyl hydrolase 29 family. As to quaternary structure, homotetramer.

The protein resides in the lysosome. The catalysed reaction is an alpha-L-fucoside + H2O = L-fucose + an alcohol. The enzyme catalyses a neolactoside IV(2)-alpha-Fuc-nLc4Cer(d18:1(4E)) + H2O = a neolactoside nLc4Cer(d18:1(4E)) + L-fucose. It catalyses the reaction a neolactoside IV(2)-alpha-Fuc-nLc4Cer(d18:0) + H2O = a neolactoside nLc4Cer(d18:0) + L-fucose. Its function is as follows. Alpha-L-fucosidase is responsible for hydrolyzing the alpha-1,6-linked fucose joined to the reducing-end N-acetylglucosamine of the carbohydrate moieties of glycoproteins. This chain is Tissue alpha-L-fucosidase, found in Homo sapiens (Human).